We begin with the raw amino-acid sequence, 750 residues long: Xylosyl- and glucuronyltransferase LARGE2s (750 aa).

Over M1–K10 the chain is Cytoplasmic. A helical; Signal-anchor for type II membrane protein transmembrane segment spans residues L11–N31. The Lumenal portion of the chain corresponds to S32–I750. Residues N116, N142, and N228 are each glycosylated (N-linked (GlcNAc...) asparagine). Positions L132–R407 are xylosyltransferase activity. The Mn(2+) site is built by D236 and D238. N-linked (GlcNAc...) asparagine glycosylation is present at N266. Positions R408–I750 are glucuronyltransferase activity. D557 and D559 together coordinate Mn(2+).

It in the C-terminal section; belongs to the glycosyltransferase 49 family. In the N-terminal section; belongs to the glycosyltransferase 8 family. The cofactor is Mn(2+).

The protein localises to the golgi apparatus membrane. The enzyme catalyses 3-O-[beta-D-GlcA-(1-&gt;3)-beta-D-Xyl-(1-&gt;4)-Rib-ol-P-Rib-ol-P-3-beta-D-GalNAc-(1-&gt;3)-beta-D-GlcNAc-(1-&gt;4)-(O-6-P-alpha-D-Man)]-Thr-[protein] + UDP-alpha-D-xylose = 3-O-[alpha-D-Xyl-(1-&gt;3)-beta-D-GlcA-(1-&gt;4)-beta-D-Xyl-(1-&gt;4)-Rib-ol-P-Rib-ol-P-3-beta-D-GalNAc-(1-&gt;3)-beta-D-GlcNAc-(1-&gt;4)-(O-6-P-alpha-D-Man)]-Thr-[protein] + UDP + H(+). It catalyses the reaction 3-O-{(1-&gt;[3)-alpha-D-Xyl-(1-&gt;3)-beta-D-GlcA-(1-&gt;](n)-4)-beta-D-Xyl-(1-&gt;4)-Rib-ol-P-Rib-ol-P-3-beta-D-GalNAc-(1-&gt;3)-beta-D-GlcNAc-(1-&gt;4)-O-6-P-alpha-D-Man}-L-Thr-[protein] + UDP-alpha-D-glucuronate = 3-O-{beta-D-GlcA-(1-&gt;[3)-alpha-D-Xyl-(1-&gt;3)-beta-D-GlcA-(1-&gt;](n)-4)-beta-D-Xyl-(1-&gt;4)-Rib-ol-P-Rib-ol-P-3-beta-D-GalNAc-(1-&gt;3)-beta-D-GlcNAc-(1-&gt;4)-O-6-P-alpha-D-Man}-L-Thr-[protein] + UDP + H(+). It carries out the reaction 3-O-{beta-D-GlcA-(1-&gt;[3)-alpha-D-Xyl-(1-&gt;3)-beta-D-GlcA-(1-&gt;](n)-4)-beta-D-Xyl-(1-&gt;4)-Rib-ol-P-Rib-ol-P-3-beta-D-GalNAc-(1-&gt;3)-beta-D-GlcNAc-(1-&gt;4)-O-6-P-alpha-D-Man}-L-Thr-[protein] + UDP-alpha-D-xylose = 3-O-{(1-&gt;[3)-alpha-D-Xyl-(1-&gt;3)-beta-D-GlcA-(1-&gt;](n+1)-4)-beta-D-Xyl-(1-&gt;4)-Rib-ol-P-Rib-ol-P-3-beta-D-GalNAc-(1-&gt;3)-beta-D-GlcNAc-(1-&gt;4)-O-6-P-alpha-D-Man}-L-Thr-[protein] + UDP + H(+). The protein operates within protein modification; protein glycosylation. Its function is as follows. Bifunctional glycosyltransferase with both alpha-1,3-xylosyltransferase and beta-1,3-glucuronyltransferase activities involved in the maturation of alpha-dystroglycan (DAG1) by glycosylation leading to DAG1 binding to laminin G-like domain-containing extracellular proteins with high affinity and in a phosphorylated-O-mannosyl trisaccharide dependent manner. Elongates the glucuronyl-beta-1,4-xylose-beta disaccharide primer structure by adding repeating units [-3-Xylose-alpha-1,3-GlcA-beta-1-] to produce a heteropolysaccharide. Supports the maturation of DAG1 more effectively than LARGE1. In addition, can modify both heparan sulfate (HS)- and chondroitin/dermatan sulfate (CS/DS)-proteoglycans (PGs), namely GPC4, with a glycosaminoglycan (GAG)-like polysaccharide composed of xylose and glucuronic acid to confer laminin binding. This chain is Xylosyl- and glucuronyltransferase LARGE2s, found in Danio rerio (Zebrafish).